We begin with the raw amino-acid sequence, 356 residues long: MQAFFANPAVSWTLLTTGGILLVVIWVLLSLAFLLLADRKIWAGVQMRKGPNVVGPFGLLQSFADFFKFVLKEIVIPAGADKVVFILAPLISLILAFVGWAVVPFAPGWVVSNLNVGILYLLAMSSLGVYGIIMGGWASNSKYPFLGALRSAAQMVSYEVSIGLIIITVILLAGSMNLSTIVEKQSGWIWNWNVFGGGLNNLVLLPVMVVAMGMFYISALAETNRPPFDLPEAESELVAGYQVEYSSTPYLLFMVAEYSNIVLMCAMISVLFFGGWNPGFPTDFLSSWHPFAANLFLALVFYAKICFWFFMFAMAKAIVPRYRYDQLMRLGWKVFLPTSLVLVAAVAAWRVFGPAA.

9 consecutive transmembrane segments (helical) span residues T17–A37, P51–L71, V83–V103, V116–G136, I162–V182, L202–E222, I261–P281, L295–A315, and V334–P354.

This sequence belongs to the complex I subunit 1 family. In terms of assembly, NDH-1 is composed of 14 different subunits. Subunits NuoA, H, J, K, L, M, N constitute the membrane sector of the complex.

It is found in the cell inner membrane. It carries out the reaction a quinone + NADH + 5 H(+)(in) = a quinol + NAD(+) + 4 H(+)(out). Its function is as follows. NDH-1 shuttles electrons from NADH, via FMN and iron-sulfur (Fe-S) centers, to quinones in the respiratory chain. The immediate electron acceptor for the enzyme in this species is believed to be ubiquinone. Couples the redox reaction to proton translocation (for every two electrons transferred, four hydrogen ions are translocated across the cytoplasmic membrane), and thus conserves the redox energy in a proton gradient. This subunit may bind ubiquinone. In Caulobacter vibrioides (strain ATCC 19089 / CIP 103742 / CB 15) (Caulobacter crescentus), this protein is NADH-quinone oxidoreductase subunit H.